Here is a 529-residue protein sequence, read N- to C-terminus: Arginine--tRNA ligase (529 aa).

A 'HIGH' region motif is present at residues 113 to 123 (ANPTGPLHIGH).

This sequence belongs to the class-I aminoacyl-tRNA synthetase family. Monomer.

Its subcellular location is the cytoplasm. The catalysed reaction is tRNA(Arg) + L-arginine + ATP = L-arginyl-tRNA(Arg) + AMP + diphosphate. This is Arginine--tRNA ligase from Aliarcobacter butzleri (strain RM4018) (Arcobacter butzleri).